Reading from the N-terminus, the 106-residue chain is ATP-dependent Clp protease adapter protein ClpS (106 aa).

Belongs to the ClpS family. In terms of assembly, binds to the N-terminal domain of the chaperone ClpA.

In terms of biological role, involved in the modulation of the specificity of the ClpAP-mediated ATP-dependent protein degradation. The sequence is that of ATP-dependent Clp protease adapter protein ClpS from Vibrio atlanticus (strain LGP32) (Vibrio splendidus (strain Mel32)).